A 145-amino-acid chain; its full sequence is Large ribosomal subunit protein uL16 (145 aa).

It belongs to the universal ribosomal protein uL16 family. In terms of assembly, part of the 50S ribosomal subunit.

Functionally, binds 23S rRNA and is also seen to make contacts with the A and possibly P site tRNAs. The sequence is that of Large ribosomal subunit protein uL16 from Lactobacillus gasseri (strain ATCC 33323 / DSM 20243 / BCRC 14619 / CIP 102991 / JCM 1131 / KCTC 3163 / NCIMB 11718 / NCTC 13722 / AM63).